The primary structure comprises 53 residues: UPF0391 membrane protein PSEEN0090 (53 aa).

The next 2 membrane-spanning stretches (helical) occupy residues 4–24 (WAIT…GGIA) and 29–49 (GIAK…FFFG).

The protein belongs to the UPF0391 family.

It is found in the cell membrane. This Pseudomonas entomophila (strain L48) protein is UPF0391 membrane protein PSEEN0090.